The following is a 529-amino-acid chain: Peptide chain release factor 3 (529 aa).

The 270-residue stretch at 11-280 (SKRRTFAIIS…GLTDWAPAPL (270 aa)) folds into the tr-type G domain. Residues 20 to 27 (SHPDAGKT), 88 to 92 (DTPGH), and 142 to 145 (NKLD) contribute to the GTP site.

It belongs to the TRAFAC class translation factor GTPase superfamily. Classic translation factor GTPase family. PrfC subfamily.

The protein localises to the cytoplasm. Functionally, increases the formation of ribosomal termination complexes and stimulates activities of RF-1 and RF-2. It binds guanine nucleotides and has strong preference for UGA stop codons. It may interact directly with the ribosome. The stimulation of RF-1 and RF-2 is significantly reduced by GTP and GDP, but not by GMP. This chain is Peptide chain release factor 3, found in Vibrio vulnificus (strain YJ016).